A 209-amino-acid polypeptide reads, in one-letter code: Ribosomal RNA large subunit methyltransferase E (209 aa).

S-adenosyl-L-methionine is bound by residues Gly63, Trp65, Asp83, Asp99, and Asp124. Residue Lys164 is the Proton acceptor of the active site.

It belongs to the class I-like SAM-binding methyltransferase superfamily. RNA methyltransferase RlmE family.

Its subcellular location is the cytoplasm. The catalysed reaction is uridine(2552) in 23S rRNA + S-adenosyl-L-methionine = 2'-O-methyluridine(2552) in 23S rRNA + S-adenosyl-L-homocysteine + H(+). Specifically methylates the uridine in position 2552 of 23S rRNA at the 2'-O position of the ribose in the fully assembled 50S ribosomal subunit. The sequence is that of Ribosomal RNA large subunit methyltransferase E from Shewanella oneidensis (strain ATCC 700550 / JCM 31522 / CIP 106686 / LMG 19005 / NCIMB 14063 / MR-1).